A 38-amino-acid polypeptide reads, in one-letter code: Photosystem II reaction center protein Y (38 aa).

Residues 2 to 20 (ILIVLLPILLAATWAFINI) form a helical membrane-spanning segment.

This sequence belongs to the PsbY family. PSII is composed of 1 copy each of membrane proteins PsbA, PsbB, PsbC, PsbD, PsbE, PsbF, PsbH, PsbI, PsbJ, PsbK, PsbL, PsbM, PsbT, PsbX, PsbY, Psb30/Ycf12, peripheral proteins PsbO, CyanoQ (PsbQ), PsbU, PsbV and a large number of cofactors. It forms dimeric complexes.

It is found in the cellular thylakoid membrane. Functionally, loosely associated component of the core of photosystem II (PSII), it is not always seen in crystals. PSII is a light-driven water plastoquinone oxidoreductase, using light energy to abstract electrons from H(2)O, generating a proton gradient subsequently used for ATP formation. The polypeptide is Photosystem II reaction center protein Y (Prochlorococcus marinus (strain MIT 9313)).